The chain runs to 515 residues: 1-pyrroline-5-carboxylate dehydrogenase (515 aa).

Active-site residues include Glu286 and Cys320.

Belongs to the aldehyde dehydrogenase family. RocA subfamily.

It catalyses the reaction L-glutamate 5-semialdehyde + NAD(+) + H2O = L-glutamate + NADH + 2 H(+). Its pathway is amino-acid degradation; L-proline degradation into L-glutamate; L-glutamate from L-proline: step 2/2. This is 1-pyrroline-5-carboxylate dehydrogenase (rocA) from Bacillus subtilis (strain 168).